The following is a 290-amino-acid chain: Serine protease 27 (290 aa).

The N-terminal stretch at 1–22 (MRRPAAVPLLLLLCFGSQRAKA) is a signal peptide. The propeptide at 23 to 34 (ATACGRPRMLNR) is activation peptide. In terms of domain architecture, Peptidase S1 spans 35–277 (MVGGQDTQEG…HHNWIHRIIP (243 aa)). N-linked (GlcNAc...) asparagine glycosylation occurs at Asn55. Residues Cys60 and Cys76 are joined by a disulfide bond. His75 functions as the Charge relay system in the catalytic mechanism. N-linked (GlcNAc...) asparagine glycosylation is present at Asn79. The active-site Charge relay system is Asp124. Cystine bridges form between Cys158-Cys235, Cys191-Cys214, and Cys225-Cys253. The active-site Charge relay system is the Ser229.

This sequence belongs to the peptidase S1 family. In terms of processing, N-glycosylated. As to expression, expressed predominantly in the pancreas.

It localises to the secreted. The sequence is that of Serine protease 27 (PRSS27) from Homo sapiens (Human).